The following is a 554-amino-acid chain: Intraflagellar transport protein 56 (554 aa).

The tract at residues 1-27 (MMLSRAKPAVGGESPHTDKRKKKGRKI) is disordered. A compositionally biased stretch (basic residues) spans 18-27 (DKRKKKGRKI). TPR repeat units follow at residues 57–90 (DDTN…ENCN), 92–125 (EVWV…LQNR), 151–184 (KEDQ…NREY), and 468–501 (ANDC…EGKR).

It belongs to the IFT56 family. As to quaternary structure, component of the IFT complex B. Interacts with IFT46; the interaction is direct. In terms of tissue distribution, high expression detected in testis. Detected also retina, kidney, lung and brain tissue. The expression level is low in spleen. Expressed in the developing liver. Present in the airway epithelial cells and the testes (at protein level).

The protein localises to the cell projection. Its subcellular location is the cilium. Functionally, component of the intraflagellar transport (IFT) complex B required for transport of proteins in the motile cilium. Required for transport of specific ciliary cargo proteins related to motility, while it is neither required for IFT complex B assembly or motion nor for cilium assembly. Required for efficient coupling between the accumulation of GLI2 and GLI3 at the ciliary tips and their dissociation from the negative regulator SUFU. Plays a key role in maintaining the integrity of the IFT complex B and the proper ciliary localization of the IFT complex B components. Not required for IFT complex A ciliary localization or function. Essential for maintaining proper microtubule organization within the ciliary axoneme. This chain is Intraflagellar transport protein 56, found in Mus musculus (Mouse).